The primary structure comprises 85 residues: Small ribosomal subunit protein eS21 (85 aa).

This sequence belongs to the eukaryotic ribosomal protein eS21 family. Component of the 40S small ribosomal subunit.

Its subcellular location is the cytoplasm. The protein resides in the cytosol. It localises to the rough endoplasmic reticulum. The polypeptide is Small ribosomal subunit protein eS21 (RPS21) (Branchiostoma belcheri (Amphioxus)).